We begin with the raw amino-acid sequence, 81 residues long: Photosystem I iron-sulfur center (81 aa).

2 4Fe-4S ferredoxin-type domains span residues 1-31 (MSHK…MVPW) and 39-68 (IASS…IRVY). 8 residues coordinate [4Fe-4S] cluster: Cys-11, Cys-14, Cys-17, Cys-21, Cys-48, Cys-51, Cys-54, and Cys-58.

The cyanobacterial PSI reaction center is composed of one copy each of PsaA,B,C,D,E,F,I,J,K,L,M and X, and forms trimeric complexes. [4Fe-4S] cluster is required as a cofactor.

It is found in the cellular thylakoid membrane. The enzyme catalyses reduced [plastocyanin] + hnu + oxidized [2Fe-2S]-[ferredoxin] = oxidized [plastocyanin] + reduced [2Fe-2S]-[ferredoxin]. Functionally, apoprotein for the two 4Fe-4S centers FA and FB of photosystem I (PSI); essential for photochemical activity. FB is the terminal electron acceptor of PSI, donating electrons to ferredoxin. The C-terminus interacts with PsaA/B/D and helps assemble the protein into the PSI complex. Required for binding of PsaD and PsaE to PSI. PSI is a plastocyanin/cytochrome c6-ferredoxin oxidoreductase, converting photonic excitation into a charge separation, which transfers an electron from the donor P700 chlorophyll pair to the spectroscopically characterized acceptors A0, A1, FX, FA and FB in turn. In Rippkaea orientalis (strain PCC 8801 / RF-1) (Cyanothece sp. (strain PCC 8801)), this protein is Photosystem I iron-sulfur center.